The sequence spans 121 residues: Small ribosomal subunit protein uS13 (121 aa).

Positions 91–121 are disordered; that stretch reads HRRGLPVRGQKTKNNARTRKGPVKTVANKKK.

This sequence belongs to the universal ribosomal protein uS13 family. In terms of assembly, part of the 30S ribosomal subunit. Forms a loose heterodimer with protein S19. Forms two bridges to the 50S subunit in the 70S ribosome.

Functionally, located at the top of the head of the 30S subunit, it contacts several helices of the 16S rRNA. In the 70S ribosome it contacts the 23S rRNA (bridge B1a) and protein L5 of the 50S subunit (bridge B1b), connecting the 2 subunits; these bridges are implicated in subunit movement. Contacts the tRNAs in the A and P-sites. The sequence is that of Small ribosomal subunit protein uS13 from Staphylococcus epidermidis (strain ATCC 35984 / DSM 28319 / BCRC 17069 / CCUG 31568 / BM 3577 / RP62A).